The chain runs to 381 residues: Homoserine O-succinyltransferase (381 aa).

The AB hydrolase-1 domain occupies 45–360; that stretch reads NAVLVCHALN…PHGHDAFLLD (316 aa). Residue S151 is the Nucleophile of the active site. R221 serves as a coordination point for substrate. Catalysis depends on residues D321 and H354. Substrate is bound at residue D355.

The protein belongs to the AB hydrolase superfamily. MetX family. As to quaternary structure, homodimer.

The protein localises to the cytoplasm. The catalysed reaction is L-homoserine + succinyl-CoA = O-succinyl-L-homoserine + CoA. Its pathway is amino-acid biosynthesis; L-methionine biosynthesis via de novo pathway; O-succinyl-L-homoserine from L-homoserine: step 1/1. Its function is as follows. Transfers a succinyl group from succinyl-CoA to L-homoserine, forming succinyl-L-homoserine. The sequence is that of Homoserine O-succinyltransferase from Paraburkholderia phytofirmans (strain DSM 17436 / LMG 22146 / PsJN) (Burkholderia phytofirmans).